The following is a 968-amino-acid chain: Alanine--tRNA ligase, cytoplasmic (968 aa).

Met1 is modified (N-acetylmethionine). Phosphoserine occurs at positions 3 and 8. Lys19 is modified (N6-acetyllysine). ATP contacts are provided by residues Arg77, His95, Trp176, and 214–216 (IWN). L-alanine contacts are provided by Asn216 and Asp239. Gly243 is an ATP binding site. Residues Ser399 and Ser555 each carry the phosphoserine modification. Positions 605, 609, 723, and 727 each coordinate Zn(2+). The Nuclear localization signal motif lies at 750-763 (RRIVAVTGAEAQKA). Lys876 bears the N6-acetyllysine mark. Lys943 carries the post-translational modification N6,N6,N6-trimethyllysine; alternate. At Lys943 the chain carries N6,N6-dimethyllysine; alternate. Residue Lys943 is modified to N6-methyllysine; alternate.

It belongs to the class-II aminoacyl-tRNA synthetase family. As to quaternary structure, monomer. Interacts with ANKRD16; the interaction is direct. It depends on Zn(2+) as a cofactor. Post-translationally, ISGylated. In terms of processing, methylation at 'Lys-943' by METTL21C.

The protein resides in the cytoplasm. It localises to the nucleus. The enzyme catalyses tRNA(Ala) + L-alanine + ATP = L-alanyl-tRNA(Ala) + AMP + diphosphate. It carries out the reaction (S)-lactate + ATP + H(+) = (S)-lactoyl-AMP + diphosphate. The catalysed reaction is (S)-lactoyl-AMP + L-lysyl-[protein] = N(6)-[(S)-lactoyl]-L-lysyl-[protein] + AMP + 2 H(+). With respect to regulation, the protein lactyltransferase activity is inhibited by beta-alanine. Functionally, catalyzes the attachment of alanine to tRNA(Ala) in a two-step reaction: alanine is first activated by ATP to form Ala-AMP and then transferred to the acceptor end of tRNA(Ala). Also edits incorrectly charged tRNA(Ala) via its editing domain. In presence of high levels of lactate, also acts as a protein lactyltransferase that mediates lactylation of lysine residues in target proteins, such as TEAD1, TP53/p53 and YAP1. Protein lactylation takes place in a two-step reaction: lactate is first activated by ATP to form lactate-AMP and then transferred to lysine residues of target proteins. Acts as an inhibitor of TP53/p53 activity by catalyzing lactylation of TP53/p53. Acts as a positive regulator of the Hippo pathway by mediating lactylation of TEAD1 and YAP1. The polypeptide is Alanine--tRNA ligase, cytoplasmic (AARS1) (Pongo abelii (Sumatran orangutan)).